A 474-amino-acid chain; its full sequence is Cysteine--tRNA ligase (474 aa).

C28 serves as a coordination point for Zn(2+). The 'HIGH' region signature appears at 30–40; that stretch reads ITVYDLCHLGH. C209, H234, and E238 together coordinate Zn(2+). The 'KMSKS' region signature appears at 269-273; it reads KMSKS. K272 provides a ligand contact to ATP.

Belongs to the class-I aminoacyl-tRNA synthetase family. In terms of assembly, monomer. It depends on Zn(2+) as a cofactor.

The protein resides in the cytoplasm. The catalysed reaction is tRNA(Cys) + L-cysteine + ATP = L-cysteinyl-tRNA(Cys) + AMP + diphosphate. This chain is Cysteine--tRNA ligase, found in Blochmanniella floridana.